Reading from the N-terminus, the 61-residue chain is Conotoxin TxMRCL-04 (61 aa).

Positions 1–22 are cleaved as a signal peptide; it reads MRCLPVFVILLLLIASTPSVDA. A propeptide spanning residues 23 to 46 is cleaved from the precursor; it reads QLKTKDDMSLASFHDNVKRILQIR.

The protein belongs to the conotoxin T superfamily. Post-translationally, contains 2 disulfide bonds that can be either 'C1-C3, C2-C4' or 'C1-C4, C2-C3', since these disulfide connectivities have been observed for conotoxins with cysteine framework V (for examples, see AC P0DQQ7 and AC P81755). As to expression, expressed by the venom duct.

The protein resides in the secreted. This chain is Conotoxin TxMRCL-04, found in Conus textile (Cloth-of-gold cone).